The primary structure comprises 305 residues: Tyrosine recombinase XerD (305 aa).

The Core-binding (CB) domain maps to 2–87; sequence SQGEAWADAF…AVRQFYRFVL (86 aa). The region spanning 108–295 is the Tyr recombinase domain; sequence PLPKVLERDE…AGEHLAHIVQ (188 aa). Residues arginine 149, lysine 173, histidine 247, arginine 250, and histidine 273 contribute to the active site. The O-(3'-phospho-DNA)-tyrosine intermediate role is filled by tyrosine 282.

The protein belongs to the 'phage' integrase family. XerD subfamily. As to quaternary structure, forms a cyclic heterotetrameric complex composed of two molecules of XerC and two molecules of XerD.

It localises to the cytoplasm. Its function is as follows. Site-specific tyrosine recombinase, which acts by catalyzing the cutting and rejoining of the recombining DNA molecules. The XerC-XerD complex is essential to convert dimers of the bacterial chromosome into monomers to permit their segregation at cell division. It also contributes to the segregational stability of plasmids. The chain is Tyrosine recombinase XerD from Caulobacter vibrioides (strain ATCC 19089 / CIP 103742 / CB 15) (Caulobacter crescentus).